A 119-amino-acid polypeptide reads, in one-letter code: Large ribosomal subunit protein uL18 (119 aa).

A disordered region spans residues 1–24; sequence MITKQDKNQVRKKRHARVRSKISG. Positions 10-20 are enriched in basic residues; the sequence is VRKKRHARVRS.

It belongs to the universal ribosomal protein uL18 family. As to quaternary structure, part of the 50S ribosomal subunit; part of the 5S rRNA/L5/L18/L25 subcomplex. Contacts the 5S and 23S rRNAs.

Its function is as follows. This is one of the proteins that bind and probably mediate the attachment of the 5S RNA into the large ribosomal subunit, where it forms part of the central protuberance. The chain is Large ribosomal subunit protein uL18 from Lysinibacillus sphaericus (strain C3-41).